Reading from the N-terminus, the 99-residue chain is Ubiquitin-related modifier 1 (99 aa).

Gly99 is modified (1-thioglycine). A Glycyl lysine isopeptide (Gly-Lys) (interchain with K-? in acceptor proteins) cross-link involves residue Gly99.

This sequence belongs to the URM1 family. Homodimer; homodimerization may provide an autoprotection to the highly active C-terminal residue before attacking its substrates. Interacts with NCS2 and NCS6. Forms a conjugate with the target protein AHP1. In terms of processing, C-terminal thiocarboxylation occurs in 2 steps, it is first acyl-adenylated (-COAMP) via the hesA/moeB/thiF part of UBA4, then thiocarboxylated (-COSH) via the rhodanese domain of UBA4.

The protein localises to the cytoplasm. Its subcellular location is the nucleus. It functions in the pathway tRNA modification; 5-methoxycarbonylmethyl-2-thiouridine-tRNA biosynthesis. In terms of biological role, acts as a sulfur carrier required for 2-thiolation of mcm(5)S(2)U at tRNA wobble positions of cytosolic tRNA(Lys), tRNA(Glu) and tRNA(Gln). Serves as sulfur donor in tRNA 2-thiolation reaction by being thiocarboxylated (-COSH) at its C-terminus by the MOCS3 homolog UBA4. The sulfur is then transferred to tRNA to form 2-thiolation of mcm(5)S(2)U. Prior mcm(5) tRNA modification by the elongator complex is required for 2-thiolation. Also acts as a ubiquitin-like protein (UBL) that is covalently conjugated via an isopeptide bond to lysine residues of target proteins such as AHP1. The thiocarboxylated form serves as substrate for conjugation and oxidative stress specifically induces the formation of UBL-protein conjugates. In Saccharomyces cerevisiae (strain RM11-1a) (Baker's yeast), this protein is Ubiquitin-related modifier 1.